Consider the following 267-residue polypeptide: tRNA pseudouridine synthase A (267 aa).

D52 serves as the catalytic Nucleophile. Substrate is bound at residue Y113.

Belongs to the tRNA pseudouridine synthase TruA family. In terms of assembly, homodimer.

The catalysed reaction is uridine(38/39/40) in tRNA = pseudouridine(38/39/40) in tRNA. Functionally, formation of pseudouridine at positions 38, 39 and 40 in the anticodon stem and loop of transfer RNAs. This is tRNA pseudouridine synthase A from Chlamydia pneumoniae (Chlamydophila pneumoniae).